A 430-amino-acid chain; its full sequence is Adenylosuccinate synthetase (430 aa).

GTP is bound by residues 11-17 (GDEGKGK) and 39-41 (GHT). Asp12 acts as the Proton acceptor in catalysis. Residues Asp12 and Gly39 each coordinate Mg(2+). IMP contacts are provided by residues 12 to 15 (DEGK), 37 to 40 (NAGH), Thr130, Arg144, Asn226, Thr241, and Arg305. The active-site Proton donor is His40. Substrate is bound at residue 301 to 307 (VTTGRKR). GTP-binding positions include Arg307, 333-335 (KLD), and 415-417 (GTG).

Belongs to the adenylosuccinate synthetase family. In terms of assembly, homodimer. Requires Mg(2+) as cofactor.

The protein resides in the cytoplasm. The catalysed reaction is IMP + L-aspartate + GTP = N(6)-(1,2-dicarboxyethyl)-AMP + GDP + phosphate + 2 H(+). The protein operates within purine metabolism; AMP biosynthesis via de novo pathway; AMP from IMP: step 1/2. Plays an important role in the de novo pathway and in the salvage pathway of purine nucleotide biosynthesis. Catalyzes the first committed step in the biosynthesis of AMP from IMP. In Scheffersomyces stipitis (strain ATCC 58785 / CBS 6054 / NBRC 10063 / NRRL Y-11545) (Yeast), this protein is Adenylosuccinate synthetase.